The primary structure comprises 204 residues: Dephospho-CoA kinase (204 aa).

The DPCK domain maps to 3–204 (VIGLTGGIGS…DRLDLAYRAH (202 aa)). 11–16 (GSGKSY) contacts ATP.

It belongs to the CoaE family.

It is found in the cytoplasm. It carries out the reaction 3'-dephospho-CoA + ATP = ADP + CoA + H(+). It participates in cofactor biosynthesis; coenzyme A biosynthesis; CoA from (R)-pantothenate: step 5/5. Functionally, catalyzes the phosphorylation of the 3'-hydroxyl group of dephosphocoenzyme A to form coenzyme A. The protein is Dephospho-CoA kinase of Ralstonia nicotianae (strain ATCC BAA-1114 / GMI1000) (Ralstonia solanacearum).